The sequence spans 638 residues: 1-deoxy-D-xylulose-5-phosphate synthase (638 aa).

Thiamine diphosphate-binding positions include His78 and 119–121 (AHS). Residue Asp150 coordinates Mg(2+). Thiamine diphosphate-binding positions include 151-152 (GS), Asn179, Tyr288, and Glu370. Asn179 is a Mg(2+) binding site.

This sequence belongs to the transketolase family. DXPS subfamily. Homodimer. Mg(2+) is required as a cofactor. It depends on thiamine diphosphate as a cofactor.

It carries out the reaction D-glyceraldehyde 3-phosphate + pyruvate + H(+) = 1-deoxy-D-xylulose 5-phosphate + CO2. Its pathway is metabolic intermediate biosynthesis; 1-deoxy-D-xylulose 5-phosphate biosynthesis; 1-deoxy-D-xylulose 5-phosphate from D-glyceraldehyde 3-phosphate and pyruvate: step 1/1. In terms of biological role, catalyzes the acyloin condensation reaction between C atoms 2 and 3 of pyruvate and glyceraldehyde 3-phosphate to yield 1-deoxy-D-xylulose-5-phosphate (DXP). This is 1-deoxy-D-xylulose-5-phosphate synthase from Brucella anthropi (strain ATCC 49188 / DSM 6882 / CCUG 24695 / JCM 21032 / LMG 3331 / NBRC 15819 / NCTC 12168 / Alc 37) (Ochrobactrum anthropi).